Reading from the N-terminus, the 303-residue chain is uncharacterized protein (303 aa).

Residues E15–L74 enclose the S4 RNA-binding domain. D138 is an active-site residue.

The protein belongs to the pseudouridine synthase RluA family.

The catalysed reaction is a uridine in RNA = a pseudouridine in RNA. This is an uncharacterized protein from Bacillus subtilis (strain 168).